The following is a 188-amino-acid chain: Probable manganese efflux pump MntP (188 aa).

Helical transmembrane passes span 3–23 (ITATVLLAFGMSMDAFAASIG), 66–86 (LEWNHWIAFVLLIFLGGRMII), 106–128 (WLLVTTAIATSLDAMAVGVGLAF), 143–163 (ATLIMSTLGMMVGRFIGPILG), and 168–188 (ILGGLVLIGIGVQILWTHFHG).

The protein belongs to the MntP (TC 9.B.29) family.

It is found in the cell inner membrane. Functionally, probably functions as a manganese efflux pump. This chain is Probable manganese efflux pump MntP, found in Escherichia fergusonii (strain ATCC 35469 / DSM 13698 / CCUG 18766 / IAM 14443 / JCM 21226 / LMG 7866 / NBRC 102419 / NCTC 12128 / CDC 0568-73).